Consider the following 165-residue polypeptide: Large ribosomal subunit protein uL10 (165 aa).

It belongs to the universal ribosomal protein uL10 family. Part of the ribosomal stalk of the 50S ribosomal subunit. The N-terminus interacts with L11 and the large rRNA to form the base of the stalk. The C-terminus forms an elongated spine to which L12 dimers bind in a sequential fashion forming a multimeric L10(L12)X complex.

Functionally, forms part of the ribosomal stalk, playing a central role in the interaction of the ribosome with GTP-bound translation factors. In Dechloromonas aromatica (strain RCB), this protein is Large ribosomal subunit protein uL10.